Consider the following 89-residue polypeptide: Heat shock protein 30A (89 aa).

Composition is skewed to basic and acidic residues over residues 1 to 11 (MRNNVERRMQR) and 19 to 39 (LSKD…RESE). The disordered stretch occupies residues 1 to 55 (MRNNVERRMQRVNEACRLLSKDTEMRRITDQNRQSRESEGTSPNSGKDGKDHFEL). The sHSP domain occupies 35 to 89 (SRESEGTSPNSGKDGKDHFELTLNVRDFSPHELTVKTQGRRVIVTGKHERKSDTE).

Belongs to the small heat shock protein (HSP20) family.

The protein is Heat shock protein 30A (hsp30a) of Xenopus laevis (African clawed frog).